A 536-amino-acid polypeptide reads, in one-letter code: Plasmepsin V (536 aa).

An N-terminal signal peptide occupies residues 1 to 34; it reads MVGASLGPPGRGSLSRLIRLVICVLTLCALSVQG. Over 35–492 the chain is Lumenal; that stretch reads RSESTEGHSK…RKDNIFLKIP (458 aa). The 401-residue stretch at 62-462 folds into the Peptidase A1 domain; sequence YFLDIDIGTP…DIQKNRIGFV (401 aa). Asp-80 is a catalytic residue. Cystine bridges form between Cys-90–Cys-172, Cys-93–Cys-96, Cys-117–Cys-128, Cys-122–Cys-133, Cys-220–Cys-466, Cys-337–Cys-382, and Cys-391–Cys-427. Residues 244-258 show a composition bias toward low complexity; it reads SKSVSGQGSGPVSES. Residues 244-264 are disordered; that stretch reads SKSVSGQGSGPVSESLSESGE. Residue Asp-313 is part of the active site. Residues 493–513 form a helical membrane-spanning segment; the sequence is FFYLYSLFVVFALSVLLSLVF. Residues 514–536 lie on the Cytoplasmic side of the membrane; it reads YVRRLYHMEYSPLPSEGKAPADA.

The protein belongs to the peptidase A1 family. Component of a complex composed of SPC25 and PMV; the interaction is mediated via the transmembrane domains. The complex interacts with the SEC61 channel-forming translocon complex and is involved in the recognition and import of PEXEL motif-containing proteins into the ER for subsequent export. In terms of processing, it is not clear if the zymogen has a cleavable propeptide. Cleavage of the putative propeptide is dispensable for catalytic activity.

It is found in the endoplasmic reticulum membrane. Its activity is regulated as follows. Inhibited by peptidomimetic inhibitors such as WEHI-842. Functionally, during the asexual blood stage, plays an essential role in the export of several proteins into the host erythrocytes by cleaving the pentameric localization motif RxLxE/Q/D (termed Plasmodium export element (PEXEL)) located downstream of the N-terminal secretory signal sequence. Specifically, cleaves after the leucine residue in the RxLxE/Q/D (or RxLxxE) motif of exported proteins including EMP1. Also, by regulating protein export, plays an essential role in gametocyte development and thus parasite transmission to the mosquito vector. The chain is Plasmepsin V from Plasmodium vivax (strain Salvador I).